Reading from the N-terminus, the 726-residue chain is Phenylalanine--tRNA ligase beta subunit (726 aa).

A tRNA-binding domain is found at 38 to 150 (FSSSKGLLFA…NFASLNDDAS (113 aa)). The region spanning 394-467 (DKKVEINFDE…RFYNYDNFKE (74 aa)) is the B5 domain. 4 residues coordinate Mg(2+): D445, D451, E454, and E455.

The protein belongs to the phenylalanyl-tRNA synthetase beta subunit family. Type 1 subfamily. As to quaternary structure, tetramer of two alpha and two beta subunits. Mg(2+) serves as cofactor.

The protein localises to the cytoplasm. The enzyme catalyses tRNA(Phe) + L-phenylalanine + ATP = L-phenylalanyl-tRNA(Phe) + AMP + diphosphate + H(+). The protein is Phenylalanine--tRNA ligase beta subunit of Mycoplasmopsis synoviae (strain 53) (Mycoplasma synoviae).